The following is a 232-amino-acid chain: MKVGIIGAMEQEVTLLRDRIENRQTFQRAGCEIYTGQINGVDVALLKSGIGKVSAALGTTLLLEHSKPDVVINTGSAGGLAPSLNVGDIVVSDEVRYHDADVTAFGYEPGQMAGCPAAFAADEKLIALAQEAIADLQLNAVRGLVVSGDAFINGAEPLARIRTTFPKAIAVEMEATAIAHVCHQFAVPFVVVRAISDVADKASHLSFDEFLSVAAQQSTRMVEAILAKLAAR.

The active-site Proton acceptor is glutamate 12. Residues glycine 78, isoleucine 152, and 173–174 (ME) contribute to the substrate site. Aspartate 197 serves as the catalytic Proton donor.

This sequence belongs to the PNP/UDP phosphorylase family. MtnN subfamily. In terms of assembly, homodimer.

The catalysed reaction is S-adenosyl-L-homocysteine + H2O = S-(5-deoxy-D-ribos-5-yl)-L-homocysteine + adenine. It catalyses the reaction S-methyl-5'-thioadenosine + H2O = 5-(methylsulfanyl)-D-ribose + adenine. The enzyme catalyses 5'-deoxyadenosine + H2O = 5-deoxy-D-ribose + adenine. Its pathway is amino-acid biosynthesis; L-methionine biosynthesis via salvage pathway; S-methyl-5-thio-alpha-D-ribose 1-phosphate from S-methyl-5'-thioadenosine (hydrolase route): step 1/2. In terms of biological role, catalyzes the irreversible cleavage of the glycosidic bond in both 5'-methylthioadenosine (MTA) and S-adenosylhomocysteine (SAH/AdoHcy) to adenine and the corresponding thioribose, 5'-methylthioribose and S-ribosylhomocysteine, respectively. Also cleaves 5'-deoxyadenosine, a toxic by-product of radical S-adenosylmethionine (SAM) enzymes, into 5-deoxyribose and adenine. Thus, is required for in vivo function of the radical SAM enzymes biotin synthase and lipoic acid synthase, that are inhibited by 5'-deoxyadenosine accumulation. This is 5'-methylthioadenosine/S-adenosylhomocysteine nucleosidase from Pectobacterium carotovorum subsp. carotovorum (strain PC1).